The chain runs to 642 residues: Kinesin-like protein KIN-7L (642 aa).

The Kinesin motor domain maps to 3 to 337; it reads KISVAVRFRP…LQFASRAKCV (335 aa). Residues 12–27 show a composition bias toward low complexity; it reads PPTTAAPAADQSPSST. The interval 12–33 is disordered; sequence PPTTAAPAADQSPSSTGGDREW. An ATP-binding site is contributed by 94–101; sequence GQTSSGKT. Coiled-coil stretches lie at residues 343 to 428 and 540 to 612; these read VNEI…SNTS and RQQL…FSQA.

It belongs to the TRAFAC class myosin-kinesin ATPase superfamily. Kinesin family. KIN-7 subfamily.

In Oryza sativa subsp. japonica (Rice), this protein is Kinesin-like protein KIN-7L.